Consider the following 376-residue polypeptide: PqqA peptide cyclase (376 aa).

Positions Val-7–Ala-222 constitute a Radical SAM core domain. The [4Fe-4S] cluster site is built by Cys-21, Cys-25, and Cys-28.

This sequence belongs to the radical SAM superfamily. PqqE family. As to quaternary structure, interacts with PqqD. The interaction is necessary for activity of PqqE. The cofactor is [4Fe-4S] cluster.

It carries out the reaction [PQQ precursor protein] + S-adenosyl-L-methionine = E-Y cross-linked-[PQQ precursor protein] + 5'-deoxyadenosine + L-methionine + H(+). Its pathway is cofactor biosynthesis; pyrroloquinoline quinone biosynthesis. Its function is as follows. Catalyzes the cross-linking of a glutamate residue and a tyrosine residue in the PqqA protein as part of the biosynthesis of pyrroloquinoline quinone (PQQ). The sequence is that of PqqA peptide cyclase from Pseudomonas putida (strain ATCC 700007 / DSM 6899 / JCM 31910 / BCRC 17059 / LMG 24140 / F1).